The primary structure comprises 175 residues: NADH-quinone oxidoreductase subunit B (175 aa).

[4Fe-4S] cluster-binding residues include Cys49, Cys50, Cys115, and Cys145.

The protein belongs to the complex I 20 kDa subunit family. As to quaternary structure, NDH-1 is composed of 14 different subunits. Subunits NuoB, C, D, E, F, and G constitute the peripheral sector of the complex. It depends on [4Fe-4S] cluster as a cofactor.

The protein resides in the cell membrane. The catalysed reaction is a quinone + NADH + 5 H(+)(in) = a quinol + NAD(+) + 4 H(+)(out). NDH-1 shuttles electrons from NADH, via FMN and iron-sulfur (Fe-S) centers, to quinones in the respiratory chain. The immediate electron acceptor for the enzyme in this species is believed to be a menaquinone. Couples the redox reaction to proton translocation (for every two electrons transferred, four hydrogen ions are translocated across the cytoplasmic membrane), and thus conserves the redox energy in a proton gradient. The polypeptide is NADH-quinone oxidoreductase subunit B (Heliobacterium modesticaldum (strain ATCC 51547 / Ice1)).